We begin with the raw amino-acid sequence, 452 residues long: Pup--protein ligase (452 aa).

Glutamate 9 provides a ligand contact to Mg(2+). Arginine 53 contributes to the ATP binding site. Tyrosine 55 contacts Mg(2+). Catalysis depends on aspartate 57, which acts as the Proton acceptor. Glutamate 63 contacts Mg(2+). Residues threonine 66 and tryptophan 419 each coordinate ATP.

It belongs to the Pup ligase/Pup deamidase family. Pup-conjugating enzyme subfamily.

The catalysed reaction is ATP + [prokaryotic ubiquitin-like protein]-L-glutamate + [protein]-L-lysine = ADP + phosphate + N(6)-([prokaryotic ubiquitin-like protein]-gamma-L-glutamyl)-[protein]-L-lysine.. Its pathway is protein degradation; proteasomal Pup-dependent pathway. The protein operates within protein modification; protein pupylation. Functionally, catalyzes the covalent attachment of the prokaryotic ubiquitin-like protein modifier Pup to the proteasomal substrate proteins, thereby targeting them for proteasomal degradation. This tagging system is termed pupylation. The ligation reaction involves the side-chain carboxylate of the C-terminal glutamate of Pup and the side-chain amino group of a substrate lysine. The polypeptide is Pup--protein ligase (Parafrankia sp. (strain EAN1pec)).